The primary structure comprises 143 residues: 3-dehydroquinate dehydratase (143 aa).

Y21 acts as the Proton acceptor in catalysis. Positions 73, 79, and 86 each coordinate substrate. Catalysis depends on H99, which acts as the Proton donor. Substrate contacts are provided by residues 100 to 101 (IS) and R110.

The protein belongs to the type-II 3-dehydroquinase family. As to quaternary structure, homododecamer.

The catalysed reaction is 3-dehydroquinate = 3-dehydroshikimate + H2O. It functions in the pathway metabolic intermediate biosynthesis; chorismate biosynthesis; chorismate from D-erythrose 4-phosphate and phosphoenolpyruvate: step 3/7. Functionally, catalyzes a trans-dehydration via an enolate intermediate. This chain is 3-dehydroquinate dehydratase, found in Deinococcus radiodurans (strain ATCC 13939 / DSM 20539 / JCM 16871 / CCUG 27074 / LMG 4051 / NBRC 15346 / NCIMB 9279 / VKM B-1422 / R1).